Consider the following 203-residue polypeptide: Microtubule-associated protein Jupiter (203 aa).

A Phosphoserine modification is found at serine 30. Phosphothreonine is present on residues threonine 41 and threonine 102. Over residues 123–132 (LISKGNYNGK) the composition is skewed to polar residues. Disordered stretches follow at residues 123-163 (LISK…GNPV) and 182-203 (NGGS…SGLW). The segment covering 133–146 (SGSVSSASSSVSSS) has biased composition (low complexity). 2 positions are modified to phosphoserine: serine 135 and serine 146.

The protein belongs to the MAP Jupiter family.

It is found in the nucleus. The protein localises to the cytoplasm. Its subcellular location is the cytoskeleton. The protein resides in the spindle. Functionally, binds to all microtubule populations. This Drosophila mojavensis (Fruit fly) protein is Microtubule-associated protein Jupiter.